Here is a 396-residue protein sequence, read N- to C-terminus: 1-deoxy-D-xylulose 5-phosphate reductoisomerase (396 aa).

NADPH is bound by residues Thr15, Gly16, Ser17, Ile18, Gly41, and Asn129. Lys130 lines the 1-deoxy-D-xylulose 5-phosphate pocket. Residue Glu131 participates in NADPH binding. Asp155 is a Mn(2+) binding site. Residues Ser156, Glu157, Ser182, and His205 each coordinate 1-deoxy-D-xylulose 5-phosphate. Residue Glu157 coordinates Mn(2+). Position 211 (Gly211) interacts with NADPH. 4 residues coordinate 1-deoxy-D-xylulose 5-phosphate: Ser218, Asn223, Lys224, and Glu227. Glu227 is a binding site for Mn(2+).

The protein belongs to the DXR family. Requires Mg(2+) as cofactor. Mn(2+) serves as cofactor.

The catalysed reaction is 2-C-methyl-D-erythritol 4-phosphate + NADP(+) = 1-deoxy-D-xylulose 5-phosphate + NADPH + H(+). Its pathway is isoprenoid biosynthesis; isopentenyl diphosphate biosynthesis via DXP pathway; isopentenyl diphosphate from 1-deoxy-D-xylulose 5-phosphate: step 1/6. In terms of biological role, catalyzes the NADPH-dependent rearrangement and reduction of 1-deoxy-D-xylulose-5-phosphate (DXP) to 2-C-methyl-D-erythritol 4-phosphate (MEP). This chain is 1-deoxy-D-xylulose 5-phosphate reductoisomerase, found in Xanthomonas axonopodis pv. citri (strain 306).